The primary structure comprises 135 residues: Retinol-binding protein 5 (135 aa).

The protein belongs to the calycin superfamily. Fatty-acid binding protein (FABP) family. Kidney.

The protein localises to the cytoplasm. Functionally, intracellular transport of retinol. The polypeptide is Retinol-binding protein 5 (RBP5) (Bos taurus (Bovine)).